The primary structure comprises 40 residues: uncharacterized protein (40 aa).

This is an uncharacterized protein from Saccharomyces cerevisiae (strain ATCC 204508 / S288c) (Baker's yeast).